Here is an 88-residue protein sequence, read N- to C-terminus: Small ribosomal subunit protein uS17 (88 aa).

Belongs to the universal ribosomal protein uS17 family. Part of the 30S ribosomal subunit.

In terms of biological role, one of the primary rRNA binding proteins, it binds specifically to the 5'-end of 16S ribosomal RNA. The protein is Small ribosomal subunit protein uS17 of Prochlorococcus marinus (strain MIT 9312).